Here is a 775-residue protein sequence, read N- to C-terminus: Subtilisin-like protease SBT3.8 (775 aa).

The first 26 residues, 1–26 (MKSCRTLIFVAIILNGLSTFVAHAGA), serve as a signal peptide directing secretion. Positions 27 to 109 (ESKVHIVYLG…VTPDSFYQLD (83 aa)) are cleaved as a propeptide — activation peptide. An Inhibitor I9 domain is found at 30 to 108 (VHIVYLGEKQ…HVTPDSFYQL (79 aa)). Positions 113–622 (TWDYLGLSVA…GGLVNPEKAA (510 aa)) constitute a Peptidase S8 domain. Residue Asn-129 is glycosylated (N-linked (GlcNAc...) asparagine). Asp-143 acts as the Charge relay system in catalysis. Asn-174 and Asn-202 each carry an N-linked (GlcNAc...) asparagine glycan. His-218 (charge relay system) is an active-site residue. One can recognise a PA domain in the interval 384 to 476 (SLVYPENPGN…VDYELGTDIL (93 aa)). N-linked (GlcNAc...) asparagine glycosylation is found at Asn-395, Asn-410, and Asn-538. Ser-553 functions as the Charge relay system in the catalytic mechanism. N-linked (GlcNAc...) asparagine glycosylation is found at Asn-645, Asn-721, and Asn-756.

This sequence belongs to the peptidase S8 family.

It is found in the secreted. The sequence is that of Subtilisin-like protease SBT3.8 from Arabidopsis thaliana (Mouse-ear cress).